The sequence spans 513 residues: Cytochrome P450 94A2 (513 aa).

The helical transmembrane segment at 7-24 (ISWLLFSTSLFWFLFLAT) threads the bilayer. A heme-binding site is contributed by C455.

This sequence belongs to the cytochrome P450 family. It depends on heme as a cofactor. In terms of tissue distribution, weakly expressed in seedlings.

The protein resides in the endoplasmic reticulum membrane. In terms of biological role, catalyzes the omega-hydroxylation of various fatty acids (FA). The substrate specificity is higher for myristate &gt; laurate = palmitate (C14&gt;C16=C12). The sequence is that of Cytochrome P450 94A2 (CYP94A2) from Vicia sativa (Spring vetch).